The following is a 347-amino-acid chain: MTQSLTIRRPDDWHLHLRDGAMMRAVLPETARHFARAIIMPNLVPPVVTAQDALAYRDRIEAALPDGADFTPLMTLYLTEQTDPDDVEAAFADGLIHAVKLYPAGATTNSQSGVATLKNVYPVLERMAQIGLPLCIHGEVTDPQVDIFDREQAFIDTVLIPLRADLPDLKVTLEHITTSHGIDYVVGADGDIAGTITTHHLMINRNHMLVGGIRPHYYCLPIVKRASHQHALRRAATSGHPRFFLGTDSAPHLDGAKETACGCAGVFSATNTMSCLAHVFDEDGALVNLEAFTSLNGPARYGLAPNAATMTLEKRDHPTNYPAKFDTDDGPLTLFDPSTPLYWHVKD.

Positions 14 and 16 each coordinate Zn(2+). Residues His16–Arg18 and Asn42 contribute to the substrate site. 3 residues coordinate Zn(2+): Lys100, His137, and His175. Position 100 is an N6-carboxylysine (Lys100). His137 provides a ligand contact to substrate. Leu220 is a binding site for substrate. Asp248 lines the Zn(2+) pocket. The active site involves Asp248. Positions 252 and 264 each coordinate substrate.

The protein belongs to the metallo-dependent hydrolases superfamily. DHOase family. Class II DHOase subfamily. As to quaternary structure, homodimer. Zn(2+) serves as cofactor.

The enzyme catalyses (S)-dihydroorotate + H2O = N-carbamoyl-L-aspartate + H(+). Its pathway is pyrimidine metabolism; UMP biosynthesis via de novo pathway; (S)-dihydroorotate from bicarbonate: step 3/3. Its function is as follows. Catalyzes the reversible cyclization of carbamoyl aspartate to dihydroorotate. The polypeptide is Dihydroorotase (Jannaschia sp. (strain CCS1)).